Consider the following 212-residue polypeptide: Large ribosomal subunit protein uL4 (212 aa).

It belongs to the universal ribosomal protein uL4 family. As to quaternary structure, part of the 50S ribosomal subunit.

One of the primary rRNA binding proteins, this protein initially binds near the 5'-end of the 23S rRNA. It is important during the early stages of 50S assembly. It makes multiple contacts with different domains of the 23S rRNA in the assembled 50S subunit and ribosome. Its function is as follows. Forms part of the polypeptide exit tunnel. The sequence is that of Large ribosomal subunit protein uL4 from Caulobacter sp. (strain K31).